We begin with the raw amino-acid sequence, 131 residues long: Large-conductance mechanosensitive channel (131 aa).

A run of 3 helical transmembrane segments spans residues 8 to 28 (FAMR…GAFG), 30 to 50 (IVSS…LGGV), and 67 to 87 (GMFI…FVFV).

The protein belongs to the MscL family. In terms of assembly, homopentamer.

It localises to the cell membrane. In terms of biological role, channel that opens in response to stretch forces in the membrane lipid bilayer. May participate in the regulation of osmotic pressure changes within the cell. This Geobacillus sp. (strain WCH70) protein is Large-conductance mechanosensitive channel.